The chain runs to 253 residues: 5'-nucleotidase SurE (253 aa).

Aspartate 8, aspartate 9, serine 39, and asparagine 92 together coordinate a divalent metal cation.

It belongs to the SurE nucleotidase family. A divalent metal cation serves as cofactor.

It is found in the cytoplasm. It catalyses the reaction a ribonucleoside 5'-phosphate + H2O = a ribonucleoside + phosphate. Its function is as follows. Nucleotidase that shows phosphatase activity on nucleoside 5'-monophosphates. This Burkholderia pseudomallei (strain 1710b) protein is 5'-nucleotidase SurE.